The chain runs to 141 residues: Protein X (141 aa).

The span at 25–48 shows a compositional bias: low complexity; it reads SSGPSFPRPAAGSAASSASSPSPS. The tract at residues 25–52 is disordered; that stretch reads SSGPSFPRPAAGSAASSASSPSPSDESD. A mitochondrial targeting sequence region spans residues 68–113; it reads PCCLVFTCADLRTMDSTVNFVSWHANRQLGMPSKDLWTPYIKDQLL.

Belongs to the orthohepadnavirus protein X family. In terms of assembly, may form homodimer. May interact with host CEBPA, CFLAR, CREB1, DDB1, E4F1, HBXIP, HSPD1/HSP60, NFKBIA, POLR2E and SMAD4. Interacts with host SMC5-SMC6 complex and induces its degradation. Interacts with host TRPC4AP; leading to prevent ubiquitination of TRPC4AP. Interacts with host PLSCR1; this interaction promotes ubiquitination and degradation of HBx and impairs HBx-mediated cell proliferation. In terms of processing, a fraction may be phosphorylated in insect cells and HepG2 cells, a human hepatoblastoma cell line. Phosphorylated in vitro by host protein kinase C or mitogen-activated protein kinase. N-acetylated in insect cells.

It is found in the host cytoplasm. Its subcellular location is the host nucleus. It localises to the host mitochondrion. Its function is as follows. Multifunctional protein that plays a role in silencing host antiviral defenses and promoting viral transcription. Does not seem to be essential for HBV infection. May be directly involved in development of cirrhosis and liver cancer (hepatocellular carcinoma). Most of cytosolic activities involve modulation of cytosolic calcium. The effect on apoptosis is controversial depending on the cell types in which the studies have been conducted. May induce apoptosis by localizing in mitochondria and causing loss of mitochondrial membrane potential. May also modulate apoptosis by binding host CFLAR, a key regulator of the death-inducing signaling complex (DISC). Promotes viral transcription by using the host E3 ubiquitin ligase DDB1 to target the SMC5-SMC6 complex to proteasomal degradation. This host complex would otherwise bind to viral episomal DNA, and prevents its transcription. Moderately stimulates transcription of many different viral and cellular transcription elements. Promoters and enhancers stimulated by HBx contain DNA binding sites for NF-kappa-B, AP-1, AP-2, c-EBP, ATF/CREB, or the calcium-activated factor NF-AT. This chain is Protein X, found in Marmota monax (Woodchuck).